The sequence spans 164 residues: Cytochrome c-type biogenesis protein CcmE (164 aa).

The Cytoplasmic portion of the chain corresponds to 1–7 (MTRKQRR). Residues 8–28 (LLMIGGAGVVLVVAVGLVLNA) form a helical; Signal-anchor for type II membrane protein membrane-spanning segment. The Periplasmic portion of the chain corresponds to 29 to 164 (MRGSIVFFST…ASADAAGPSR (136 aa)). Heme-binding residues include His122 and Tyr126. Positions 137-149 (KQGHWKDDYEKKP) are enriched in basic and acidic residues. Residues 137 to 164 (KQGHWKDDYEKKPPGAPGASADAAGPSR) are disordered. The span at 153–164 (PGASADAAGPSR) shows a compositional bias: low complexity.

This sequence belongs to the CcmE/CycJ family.

The protein localises to the cell inner membrane. Heme chaperone required for the biogenesis of c-type cytochromes. Transiently binds heme delivered by CcmC and transfers the heme to apo-cytochromes in a process facilitated by CcmF and CcmH. The sequence is that of Cytochrome c-type biogenesis protein CcmE from Rhodopseudomonas palustris (strain BisB5).